The primary structure comprises 151 residues: Transcriptional regulator MraZ (151 aa).

SpoVT-AbrB domains follow at residues 5–52 (ANAV…PLDE) and 81–124 (AVDL…DEDA).

It belongs to the MraZ family. Forms oligomers.

It is found in the cytoplasm. It localises to the nucleoid. The sequence is that of Transcriptional regulator MraZ from Pseudomonas putida (strain W619).